Here is a 293-residue protein sequence, read N- to C-terminus: DegV domain-containing protein MG326 homolog (293 aa).

A DegV domain is found at 3 to 289 (TAIITDSTAS…IDAFSISLLL (287 aa)). Residues T62 and S94 each contribute to the hexadecanoate site.

May bind long-chain fatty acids, such as palmitate, and may play a role in lipid transport or fatty acid metabolism. The sequence is that of DegV domain-containing protein MG326 homolog from Mycoplasma pneumoniae (strain ATCC 29342 / M129 / Subtype 1) (Mycoplasmoides pneumoniae).